The sequence spans 97 residues: Large ribosomal subunit protein bL36m (97 aa).

Belongs to the bacterial ribosomal protein bL36 family. Component of the mitochondrial ribosome large subunit (39S) which comprises a 16S rRNA and about 50 distinct proteins.

It is found in the mitochondrion. This chain is Large ribosomal subunit protein bL36m (Mrpl36), found in Rattus norvegicus (Rat).